The primary structure comprises 226 residues: PKHD-type hydroxylase Pfl01_0799 (226 aa).

The region spanning 78-178 (KVFPPLLNCY…RYASFFWTQS (101 aa)) is the Fe2OG dioxygenase domain. Fe cation-binding residues include histidine 96, aspartate 98, and histidine 159. Arginine 169 serves as a coordination point for 2-oxoglutarate.

Fe(2+) serves as cofactor. The cofactor is L-ascorbate.

This Pseudomonas fluorescens (strain Pf0-1) protein is PKHD-type hydroxylase Pfl01_0799.